The following is an 839-amino-acid chain: Autophagy-related protein 9A (839 aa).

The disordered stretch occupies residues 1 to 20 (MAQFDTEYQRLEASYSDSPP). A2 is subject to N-acetylalanine. Topologically, residues 2 to 61 (AQFDTEYQRLEASYSDSPPGEEDLLVHVAEGSKSPWHHIENLDLFFSRVYNLHQKNGFTC) are cytoplasmic. The Tyrosine-based sorting signal motif lies at 8 to 11 (YQRL). Phosphoserine is present on residues S14, S16, and S18. A helical membrane pass occupies residues 62–84 (MLIGEIFELMQFLFVVAFTTFLV). At 85–128 (SCVDYDILFANKMVNHSLHPTEPVKVTLPDAFLPAQVCSARIQE) the chain is on the lumenal side. N99 carries N-linked (GlcNAc...) asparagine glycosylation. A helical membrane pass occupies residues 129-154 (NGSLITILVIAGVFWIHRLIKFIYNI). Residues 155–290 (CCYWEIHSFY…ELAQRLSNRI (136 aa)) lie on the Cytoplasmic side of the membrane. Residues 291–301 (LWIGIANFLLC) lie within the membrane without spanning it. The Cytoplasmic segment spans residues 302-319 (PLILIWQILYAFFSYAEV). An intramembrane segment occupies 320 to 328 (LKREPGALG). The Cytoplasmic segment spans residues 329–371 (ARCWSLYGRCYLRHFNELEHELQSRLNRGYKPASKYMNCFLSP). Residues 372–397 (LLTLLAKNGAFFAGSILAVLIALTIY) form a helical membrane-spanning segment. Residues 398–406 (DEDVLAVEH) lie on the Lumenal side of the membrane. The helical transmembrane segment at 407-424 (VLTTVTLLGVTVTVCRSF) threads the bilayer. The Cytoplasmic segment spans residues 425–470 (IPDQHMVFCPEQLLRVILAHIHYMPDHWQGNAHRSQTRDEFAQLFQ). An intramembrane segment occupies 471-480 (YKAVFILEEL). The Cytoplasmic segment spans residues 481-483 (LSP). The stretch at 484–492 (IVTPLILIF) is an intramembrane region. The Cytoplasmic portion of the chain corresponds to 493-839 (CLRPRALEII…DELPPQVHKV (347 aa)). 5 positions are modified to phosphoserine: S656, S735, S738, S741, and S828. 2 disordered regions span residues 656–686 (SPLQ…SSGS) and 719–839 (QQAQ…VHKV). The segment covering 724–736 (EPERHLWHRRESD) has biased composition (basic and acidic residues). Composition is skewed to acidic residues over residues 737-747 (ESGESAPDEGG) and 823-832 (VPEEGSEDEL).

Belongs to the ATG9 family. Homotrimer; forms a homotrimer with a central pore that forms a path between the two membrane leaflets. Interacts (via cytoplasmic its C-terminus) with ATG2A. Interacts with SUPT20H. Interacts (via the tyrosine-based sorting signal motif) with AP4M1; promoting association with the AP-4 complex. Interacts with ARFIP1 and ARFIP2. Interacts with PI4K2A and PI4KB. Interacts with ATG4A; the interaction is direct and promotes ATG9A trafficking. In terms of processing, ufmylated in a DDRGK1 dependent manner.

It localises to the preautophagosomal structure membrane. The protein resides in the cytoplasmic vesicle. The protein localises to the autophagosome membrane. Its subcellular location is the golgi apparatus. It is found in the trans-Golgi network membrane. It localises to the late endosome membrane. The protein resides in the recycling endosome membrane. The protein localises to the endoplasmic reticulum membrane. Its subcellular location is the mitochondrion membrane. It catalyses the reaction a 1,2-diacyl-sn-glycero-3-phosphocholine(in) = a 1,2-diacyl-sn-glycero-3-phosphocholine(out). The catalysed reaction is a 1,2-diacyl-sn-glycero-3-phospho-L-serine(in) = a 1,2-diacyl-sn-glycero-3-phospho-L-serine(out). The enzyme catalyses a 1,2-diacyl-sn-glycero-3-phosphoethanolamine(in) = a 1,2-diacyl-sn-glycero-3-phosphoethanolamine(out). Phospholipid scramblase involved in autophagy by mediating autophagosomal membrane expansion. Cycles between the preautophagosomal structure/phagophore assembly site (PAS) and the cytoplasmic vesicle pool and supplies membrane for the growing autophagosome. Lipid scramblase activity plays a key role in preautophagosomal structure/phagophore assembly by distributing the phospholipids that arrive through ATG2 (ATG2A or ATG2B) from the cytoplasmic to the luminal leaflet of the bilayer, thereby driving autophagosomal membrane expansion. Also required to supply phosphatidylinositol 4-phosphate to the autophagosome initiation site by recruiting the phosphatidylinositol 4-kinase beta (PI4KB) in a process dependent on ARFIP2, but not ARFIP1. In addition to autophagy, also plays a role in necrotic cell death. The protein is Autophagy-related protein 9A of Pongo abelii (Sumatran orangutan).